A 118-amino-acid polypeptide reads, in one-letter code: Cell division topological specificity factor (118 aa).

Residues 86–118 are disordered; sequence RSQAKAVSSQENGASSQEAVSSQESVSTPGAME. Over residues 99 to 112 the composition is skewed to low complexity; sequence ASSQEAVSSQESVS.

Belongs to the MinE family.

Prevents the cell division inhibition by proteins MinC and MinD at internal division sites while permitting inhibition at polar sites. This ensures cell division at the proper site by restricting the formation of a division septum at the midpoint of the long axis of the cell. This Prochlorococcus marinus (strain MIT 9313) protein is Cell division topological specificity factor.